A 651-amino-acid chain; its full sequence is MGCCGSTQNSKRDWRPLEEHSCTDIPWLLLFILFCVGMGFICGFSIATGAASRLVFGYDSYGNICGQKNTKIEGFINSGLDHSNNKYVFFLDPCKLDLVNRKIKSIALCVSECPREELQTLNDVKKFAETNGSALCDYSLTPSQYTTDSRAPSLCPKLPVPKSAPIPFFHRCAPVNISCYAKFAEALITFVSDNSVLHRLISGVMTSKEIIMGLCLLSLVLSMILMVIIRYISRVLVWIITILVVLGSLGGTGVLWWLYADNKKSLNENLPPDQLQVSKDNLQALLVYAIAATVFTVILLLMMLIMRKRVALTIALFNVAGKVFIHLPLLVFQPFWTFFALLLFWVYWVMVLLFLGTAGDPFTNEQGFVEFRINGPLQYMWWYHLVGLIWISEFILACQQMTIAGAVVTYYFTRNKNDLPFTPILASVNRLIRYHLGTVAKGAFIITLVKIPRMILMYIHSQLKGKENACARCMLKSCICCLWCLEKCLAYLNQNAYTATAINSTNFCTSAKDALVILVENALRVAAINTVGDFMLFLGKILIVSCTGLAGIMLLNYQRDYTVWVLPLIIVCLFAFLVAHCFLSIYEMVVDVLFLCFAIDTKYNDGSPGKEFYMDKVLMEFVEDSRRALKEPGSTAEGRELKPMASGTSTA.

Residues 1–25 lie on the Cytoplasmic side of the membrane; it reads MGCCGSTQNSKRDWRPLEEHSCTDI. The helical transmembrane segment at 26–46 threads the bilayer; it reads PWLLLFILFCVGMGFICGFSI. At 47 to 208 the chain is on the extracellular side; it reads ATGAASRLVF…RLISGVMTSK (162 aa). N131 and N176 each carry an N-linked (GlcNAc...) asparagine glycan. The helical transmembrane segment at 209–229 threads the bilayer; sequence EIIMGLCLLSLVLSMILMVII. At 230 to 234 the chain is on the cytoplasmic side; sequence RYISR. The helical transmembrane segment at 235 to 255 threads the bilayer; that stretch reads VLVWIITILVVLGSLGGTGVL. Topologically, residues 256–284 are extracellular; that stretch reads WWLYADNKKSLNENLPPDQLQVSKDNLQA. The chain crosses the membrane as a helical span at residues 285–305; the sequence is LLVYAIAATVFTVILLLMMLI. The Cytoplasmic segment spans residues 306–311; it reads MRKRVA. A helical membrane pass occupies residues 312–332; the sequence is LTIALFNVAGKVFIHLPLLVF. Over 333-334 the chain is Extracellular; it reads QP. A helical membrane pass occupies residues 335–355; the sequence is FWTFFALLLFWVYWVMVLLFL. Over 356-376 the chain is Cytoplasmic; that stretch reads GTAGDPFTNEQGFVEFRINGP. A helical membrane pass occupies residues 377–397; that stretch reads LQYMWWYHLVGLIWISEFILA. The Extracellular segment spans residues 398 to 438; sequence CQQMTIAGAVVTYYFTRNKNDLPFTPILASVNRLIRYHLGT. The helical transmembrane segment at 439–459 threads the bilayer; sequence VAKGAFIITLVKIPRMILMYI. At 460–533 the chain is on the cytoplasmic side; that stretch reads HSQLKGKENA…RVAAINTVGD (74 aa). Residues 534-554 traverse the membrane as a helical segment; it reads FMLFLGKILIVSCTGLAGIML. At 555–562 the chain is on the extracellular side; sequence LNYQRDYT. Residues 563-583 traverse the membrane as a helical segment; it reads VWVLPLIIVCLFAFLVAHCFL. The Cytoplasmic portion of the chain corresponds to 584-651; the sequence is SIYEMVVDVL…KPMASGTSTA (68 aa). A disordered region spans residues 629–651; sequence LKEPGSTAEGRELKPMASGTSTA.

This sequence belongs to the CTL (choline transporter-like) family.

The protein localises to the cell membrane. Its subcellular location is the mitochondrion outer membrane. It carries out the reaction choline(out) + n H(+)(in) = choline(in) + n H(+)(out). The catalysed reaction is ethanolamine(out) + n H(+)(in) = ethanolamine(in) + n H(+)(out). Its function is as follows. Choline/H+ antiporter. Also acts as a high-affinity ethanolamine/H+ antiporter, regulating the supply of extracellular ethanolamine (Etn) for the CDP-Etn pathway, redistribute intracellular Etn and balance the CDP-Cho and CDP-Etn arms of the Kennedy pathway. Involved in membrane synthesis and myelin production. This Xenopus laevis (African clawed frog) protein is Choline transporter-like protein 1 (slc44a1).